We begin with the raw amino-acid sequence, 289 residues long: tRNA pseudouridine synthase A (289 aa).

The Nucleophile role is filled by aspartate 53. A substrate-binding site is contributed by tyrosine 119.

Belongs to the tRNA pseudouridine synthase TruA family. As to quaternary structure, homodimer.

The enzyme catalyses uridine(38/39/40) in tRNA = pseudouridine(38/39/40) in tRNA. Its function is as follows. Formation of pseudouridine at positions 38, 39 and 40 in the anticodon stem and loop of transfer RNAs. The sequence is that of tRNA pseudouridine synthase A from Corynebacterium glutamicum (strain ATCC 13032 / DSM 20300 / JCM 1318 / BCRC 11384 / CCUG 27702 / LMG 3730 / NBRC 12168 / NCIMB 10025 / NRRL B-2784 / 534).